A 318-amino-acid polypeptide reads, in one-letter code: MRLFAFLWSSVAFLSTVQAQVSQTASQTQDDSSTPTPTPPDKYVNIADALRTKTPMATPNRTIMPTRQDPRAPEPPTPEPTYLPTLSPTPAPTPDPGPWVAKWMDHDQVQPFKQPDPVTVSEKAAVKFKPQIHITNGCHPYPAVTWWGETSGGLKTKGAPSAGCKGSGWGSQVYGRSTWVKGVWAIMYSWYFPKDSPSTGLGHRHDWEHVIVWIDNPDIENPKILAVTPSAHSGYSKQVPPSADCVDGTSVKVKYESKWPINHALESTTEGGETQDLIMWNQLSENALRAMNSVTWGDANCPFCDGNFQAKLDKAWPF.

The first 19 residues, 1-19 (MRLFAFLWSSVAFLSTVQA), serve as a signal peptide directing secretion. Over residues 24 to 35 (TASQTQDDSSTP) the composition is skewed to low complexity. 2 disordered regions span residues 24-43 (TASQTQDDSSTPTPTPPDKY) and 50-93 (LRTK…PAPT). Residues 55 to 65 (PMATPNRTIMP) are compositionally biased toward polar residues. The N-linked (GlcNAc...) asparagine glycan is linked to asparagine 60. The span at 73–93 (PEPPTPEPTYLPTLSPTPAPT) shows a compositional bias: pro residues. The short motif at 185-195 (AIMYSWYFPKD) is the Conserved undecapeptide motif I element. The Hepta-peptide GHRHDWE motif II signature appears at 202 to 208 (GHRHDWE).

The protein belongs to the Necrosis inducing protein (NPP1) family.

The protein localises to the secreted. Its function is as follows. Secreted effector that contributes to virulence during infection by P.capsici. Induces distinct chlorosis at 3 days after inoculation of host C.annuum leaves, and all the chlorotic areas gradually turn brown and become moderately necrotic at 7 days after inoculation. Caused only small necrotic areas at 7 days after non-host N.benthamiana leaves infection. In Phytophthora capsici, this protein is NLP effector protein 9.